Consider the following 509-residue polypeptide: Maturase K (509 aa).

It belongs to the intron maturase 2 family. MatK subfamily.

It is found in the plastid. Its subcellular location is the chloroplast. In terms of biological role, usually encoded in the trnK tRNA gene intron. Probably assists in splicing its own and other chloroplast group II introns. This Nicotiana glauca (Glaucous tobacco) protein is Maturase K.